A 476-amino-acid chain; its full sequence is Alkaline phosphatase H (476 aa).

The signal sequence occupies residues 1–26 (MTPGYPLALSLAVSMAVLGSALPAQA). Aspartate 77 contributes to the Mg(2+) binding site. Aspartate 77 provides a ligand contact to Zn(2+). The active-site Phosphoserine intermediate is serine 128. At serine 128 the chain carries Phosphoserine. Residues aspartate 179 and threonine 181 each contribute to the Mg(2+) site. The residue at position 206 (serine 206) is a Phosphoserine. Glutamine 346 is a Mg(2+) binding site. Residues aspartate 353, histidine 357, aspartate 395, histidine 396, and histidine 438 each coordinate Zn(2+).

It belongs to the alkaline phosphatase family. It depends on Mg(2+) as a cofactor. Zn(2+) is required as a cofactor.

Its subcellular location is the secreted. It is found in the periplasm. It catalyses the reaction a phosphate monoester + H2O = an alcohol + phosphate. Has only phosphomonoesterase activity. The polypeptide is Alkaline phosphatase H (phoA) (Pseudomonas aeruginosa (strain UCBPP-PA14)).